The chain runs to 837 residues: A disintegrin and metalloproteinase with thrombospondin motifs 4 (837 aa).

The N-terminal stretch at 1 to 51 (MSQTGSHPGRGLAGRWLWGAQPCLLLPIVPLSWLVWLLLLLLASLLPSARL) is a signal peptide. A propeptide spanning residues 52-212 (ASPLPREEEI…PSPRPRRAKR (161 aa)) is cleaved from the precursor. Asparagine 68 carries N-linked (GlcNAc...) asparagine glycosylation. The Cysteine switch motif lies at 192–199 (PMCNVKAP). Cysteine 194 serves as a coordination point for Zn(2+). Positions 218 to 428 (RFVETLVVAD…GYGHCLLDKP (211 aa)) constitute a Peptidase M12B domain. Cystine bridges form between cysteine 293-cysteine 345, cysteine 322-cysteine 327, cysteine 339-cysteine 423, cysteine 377-cysteine 407, cysteine 449-cysteine 472, cysteine 460-cysteine 482, cysteine 467-cysteine 501, cysteine 495-cysteine 506, cysteine 532-cysteine 569, cysteine 536-cysteine 574, and cysteine 547-cysteine 559. Histidine 361 lines the Zn(2+) pocket. Residue glutamate 362 is part of the active site. Zn(2+) contacts are provided by histidine 365 and histidine 371. In terms of domain architecture, Disintegrin spans 437–519 (TFPGKDYDAD…DQLQDFNIPQ (83 aa)). The region spanning 520-575 (AGGWGPWGPWGDCSRTCGGGVQFSSRDCTRPVPRNGGKYCEGRRTRFRSCNTEDCP) is the TSP type-1 domain. The tract at residues 686–837 (SKQSGSFRKF…LRRRPWAGRK (152 aa)) is spacer.

Interacts with SRPX2. It depends on Zn(2+) as a cofactor. In terms of processing, the precursor is cleaved by a furin endopeptidase. Glycosylated. Can be O-fucosylated by POFUT2 on a serine or a threonine residue found within the consensus sequence C1-X(2)-(S/T)-C2-G of the TSP type-1 repeat domains where C1 and C2 are the first and second cysteine residue of the repeat, respectively. Fucosylated repeats can then be further glycosylated by the addition of a beta-1,3-glucose residue by the glucosyltransferase, B3GALTL. Fucosylation mediates the efficient secretion of ADAMTS family members. Can also be C-glycosylated with one or two mannose molecules on tryptophan residues within the consensus sequence W-X-X-W of the TPRs, and N-glycosylated. These other glycosylations can also facilitate secretion. Expressed in brain, lung and heart. Expressed at very low level in placenta and skeletal muscles. Isoform 2: Detected in osteoarthritic synovium.

It localises to the secreted. The protein resides in the extracellular space. The protein localises to the extracellular matrix. It carries out the reaction Glutamyl endopeptidase. Bonds cleaved include 370-Thr-Glu-Gly-Glu-|-Ala-Arg-Gly-Ser-377 in the interglobular domain of mammalian aggrecan.. Cleaves aggrecan, a cartilage proteoglycan, at the '392-Glu-|-Ala-393' site and may be involved in its turnover. Also cleaves COMP. May play an important role in the destruction of aggrecan in arthritic diseases. Could be a critical factor in the exacerbation of neurodegeneration in Alzheimer disease. This chain is A disintegrin and metalloproteinase with thrombospondin motifs 4 (ADAMTS4), found in Homo sapiens (Human).